The following is a 630-amino-acid chain: Polygalacturonase-1 non-catalytic subunit beta (630 aa).

The signal sequence occupies residues 1 to 27; that stretch reads MHTKIHLPPCILLLLLFSLPSFNVVVG. Positions 28 to 108 are excised as a propeptide; the sequence is GDGESGNPFT…MCAPDLSPSL (81 aa). N-linked (GlcNAc...) asparagine glycans are attached at residues N124, N142, N256, N334, N369, and N387. Residues 398-630 constitute a propeptide that is removed on maturation; sequence EVNGGKKVNN…ENDMTWAIAD (233 aa). A BURP domain is found at 415 to 629; sequence FFREKMLKSG…FENDMTWAIA (215 aa).

In terms of assembly, interacts with polygalacturonase-2 (isoenzymes PG2A and PG2B) to form heterodimers called polygalacturonase-1 (PG1). Mostly expressed in fruit pericarp. Also detected at low levels in cell wall of roots, leaves and flowers (at protein level).

Its subcellular location is the secreted. It is found in the extracellular space. It localises to the apoplast. The protein resides in the cell wall. In terms of biological role, non-catalytic subunit of the polygalacturonase isozyme 1 (PG1). Necessary and sufficient to convert the polygalacturonase from its monomeric form PG2 to its heterodimeric form PG1. Seems to limit the depolymerization and solubilization of cell wall polyuronides mediated by PG2 during ripening, probably by recruiting PG2 to form PG1. This is Polygalacturonase-1 non-catalytic subunit beta (GP1) from Solanum lycopersicum (Tomato).